The sequence spans 559 residues: MLEHFPWLTTMIALPLVAALFIPLIPDKDGKQVRWYALGVGLADFVLMSYVFWTNYDISSTGFQLQEKFSWIPQFGLSWSVSVDGISMPLVLLAGLVTTLSIFAAWQVDHKPRLFYFLMLVLYAAQIGVFVAQDMLLLFIMWELELVPVYLLVCIWGGQKRQYAAMKFLLYTAAASVFILVAALGLAFYGDVTTFDIAELGLKDYPIALELFLYAGLLIAFGVKLAIFPFHTWLPDAHGEASAPVSMILAGVLLKMGGYGLIRLNLGLLEDAHVYFAPILVILGVVNIIYGGFSSFAQDNMKRRLAYSSVSHMGFVLLGIASFTDLGISGAMLQMLSHGLIAAVLFFLAGVTYDRTHTLSLAQMGNIGKVMPTVFALFTMGAMASLALPGMSGFVSELAVFVGVSSSDIYSTPFKTVTVFLAAVGLVLTPIYLLSMLRQLFYGNNIPPSCNLEQDNLSANSDQEAVCFGTSCVLPGNAIYDDARPREVFIAACFLLPIIAVGLYPKLATQTYDATTVAVNSQVRQSYVQIAETNPRVYAEALTAPHIPTTDFATVKVQP.

The next 14 helical transmembrane spans lie at 5–25 (FPWLTTMIALPLVAALFIPLI), 35–55 (WYALGVGLADFVLMSYVFWTN), 86–106 (ISMPLVLLAGLVTTLSIFAAW), 114–134 (LFYFLMLVLYAAQIGVFVAQD), 136–156 (LLLFIMWELELVPVYLLVCIW), 168–188 (FLLYTAAASVFILVAALGLAF), 207–227 (IALELFLYAGLLIAFGVKLAI), 242–262 (SAPVSMILAGVLLKMGGYGLI), 274–294 (VYFAPILVILGVVNIIYGGFS), 310–330 (VSHMGFVLLGIASFTDLGISG), 331–351 (AMLQMLSHGLIAAVLFFLAGV), 374–394 (VFALFTMGAMASLALPGMSGF), 417–437 (VTVFLAAVGLVLTPIYLLSML), and 488–508 (VFIAACFLLPIIAVGLYPKLA).

It belongs to the complex I subunit 4 family.

It localises to the cellular thylakoid membrane. The catalysed reaction is a plastoquinone + NADH + (n+1) H(+)(in) = a plastoquinol + NAD(+) + n H(+)(out). The enzyme catalyses a plastoquinone + NADPH + (n+1) H(+)(in) = a plastoquinol + NADP(+) + n H(+)(out). In terms of biological role, NDH-1 shuttles electrons from NAD(P)H, via FMN and iron-sulfur (Fe-S) centers, to quinones in the respiratory chain. The immediate electron acceptor for the enzyme in this species is believed to be plastoquinone. Couples the redox reaction to proton translocation (for every two electrons transferred, four hydrogen ions are translocated across the cytoplasmic membrane), and thus conserves the redox energy in a proton gradient. The protein is NAD(P)H-quinone oxidoreductase chain 4-2 (ndhD2) of Synechocystis sp. (strain ATCC 27184 / PCC 6803 / Kazusa).